We begin with the raw amino-acid sequence, 188 residues long: Peptidyl-tRNA hydrolase (188 aa).

Tyr14 provides a ligand contact to tRNA. Catalysis depends on His19, which acts as the Proton acceptor. Residues Tyr64, Asn66, and Asn112 each coordinate tRNA.

This sequence belongs to the PTH family. As to quaternary structure, monomer.

It localises to the cytoplasm. The catalysed reaction is an N-acyl-L-alpha-aminoacyl-tRNA + H2O = an N-acyl-L-amino acid + a tRNA + H(+). In terms of biological role, hydrolyzes ribosome-free peptidyl-tRNAs (with 1 or more amino acids incorporated), which drop off the ribosome during protein synthesis, or as a result of ribosome stalling. Functionally, catalyzes the release of premature peptidyl moieties from peptidyl-tRNA molecules trapped in stalled 50S ribosomal subunits, and thus maintains levels of free tRNAs and 50S ribosomes. The sequence is that of Peptidyl-tRNA hydrolase from Clostridium perfringens (strain SM101 / Type A).